Consider the following 576-residue polypeptide: K(+)/H(+) antiporter NhaP2 (576 aa).

The next 13 helical transmembrane spans lie at 6–26, 34–54, 58–78, 87–107, 109–129, 163–183, 185–205, 219–239, 242–262, 271–291, 299–319, 335–355, and 359–379; these read INSF…LSPM, ILLI…GGIL, YSTA…DGGM, VALW…TSIT, MMAA…GAIV, PMAV…DTEM, FSFM…LGLG, LADG…YAAS, LGGS…NKPT, VLDG…GLLL, ILIP…PVAV, WFIS…VFPM, and LPGA…SLLV. Positions 405 to 486 constitute an RCK C-terminal domain; the sequence is SGVEIYPSSE…LEALSNLFSQ (82 aa).

This sequence belongs to the monovalent cation:proton antiporter 1 (CPA1) transporter (TC 2.A.36) family. NhaP2 subfamily.

It is found in the cell inner membrane. It catalyses the reaction K(+)(in) + H(+)(out) = K(+)(out) + H(+)(in). Functionally, k(+)/H(+) antiporter that extrudes potassium in exchange for external protons and maintains the internal concentration of potassium under toxic levels. This Shewanella baltica (strain OS155 / ATCC BAA-1091) protein is K(+)/H(+) antiporter NhaP2.